A 457-amino-acid polypeptide reads, in one-letter code: UDP-N-acetylglucosamine 1-carboxyvinyltransferase (457 aa).

A phosphoenolpyruvate-binding site is contributed by 34 to 35 (KN). Arg104 contacts UDP-N-acetyl-alpha-D-glucosamine. The Proton donor role is filled by Cys128. Cys128 is subject to 2-(S-cysteinyl)pyruvic acid O-phosphothioketal. Residues Asp319 and Ile341 each contribute to the UDP-N-acetyl-alpha-D-glucosamine site. A disordered region spans residues 436-457 (INKSKNRSSNSKLKEVSEIRAA). A compositionally biased stretch (basic and acidic residues) spans 447–457 (KLKEVSEIRAA).

The protein belongs to the EPSP synthase family. MurA subfamily.

It is found in the cytoplasm. It catalyses the reaction phosphoenolpyruvate + UDP-N-acetyl-alpha-D-glucosamine = UDP-N-acetyl-3-O-(1-carboxyvinyl)-alpha-D-glucosamine + phosphate. Its pathway is cell wall biogenesis; peptidoglycan biosynthesis. Functionally, cell wall formation. Adds enolpyruvyl to UDP-N-acetylglucosamine. This is UDP-N-acetylglucosamine 1-carboxyvinyltransferase from Prochlorococcus marinus subsp. pastoris (strain CCMP1986 / NIES-2087 / MED4).